Here is a 490-residue protein sequence, read N- to C-terminus: Dipeptide and tripeptide permease A (490 aa).

The Cytoplasmic portion of the chain corresponds to 1–34 (MSNANNNQPENVSLNAFKQPRAFYLIFSIELWER). Residues 35–55 (FGYYGLQGIMAVYLVKMLGMT) traverse the membrane as a helical segment. Residues 56 to 59 (EADS) are Periplasmic-facing. A helical membrane pass occupies residues 60-80 (ITLFSSFSALVYGFVAIGGWL). Topologically, residues 81–89 (GDKVLGAKR) are cytoplasmic. A helical transmembrane segment spans residues 90-110 (VIMLGALVLAIGYAFVAYSGH). D111 is a topological domain (periplasmic). Residues 112-132 (LSLVYVGMATIAVGNGLFKAN) traverse the membrane as a helical segment. At 133–153 (PSSLLSTCYEKNDPRLDGAFT) the chain is on the cytoplasmic side. Residues 154 to 174 (MYYMSVNIGSFFSMLATPWLA) traverse the membrane as a helical segment. Topologically, residues 175 to 176 (AR) are periplasmic. A helical membrane pass occupies residues 177–197 (FGWSVAFSLSVVGMLITLVNF). Residues 198–217 (MMCRRWVKDQGSKPDFAPLQ) lie on the Cytoplasmic side of the membrane. The chain crosses the membrane as a helical span at residues 218–238 (VGKLMMTLVGVVILVAISTWL). Over 239-246 (LHNQTIAR) the chain is Periplasmic. The chain crosses the membrane as a helical span at residues 247-267 (WALAIISAGIILIFAKETFAL). The Cytoplasmic segment spans residues 268–274 (QGGARRK). The helical transmembrane segment at 275-295 (MIVAFLLMLEAVVFFVLYSQM) threads the bilayer. Residues 296 to 320 (PTSLNFFAIHNVEHSIFGIAFEPEQ) are Periplasmic-facing. The helical transmembrane segment at 321-341 (YQALNPFWIMVASPILAAIYN) threads the bilayer. Over 342–352 (KMGDRLPMPHK) the chain is Cytoplasmic. The chain crosses the membrane as a helical span at residues 353 to 373 (FAIGMVLCSGAFLVLPWGASF). Topologically, residues 374–383 (ANEAGIVSVN) are periplasmic. Residues 384–404 (WLILSYALQSIGELMISGLGL) traverse the membrane as a helical segment. Topologically, residues 405 to 414 (AMVAQLVPQR) are cytoplasmic. A helical membrane pass occupies residues 415-435 (LMGFIMGSWFLTTAAAALIAG). Residues 436-460 (KVAALTAVPGGEVADPHASLAIYSH) lie on the Periplasmic side of the membrane. The helical transmembrane segment at 461-481 (VFMQIGLATAVIAVLMLLTAP) threads the bilayer. At 482-490 (KLNRMTLGD) the chain is on the cytoplasmic side.

Belongs to the major facilitator superfamily. Proton-dependent oligopeptide transporter (POT/PTR) (TC 2.A.17) family. DtpA subfamily.

Its subcellular location is the cell inner membrane. Functionally, proton-dependent permease that transports di- and tripeptides. The chain is Dipeptide and tripeptide permease A from Edwardsiella piscicida.